Reading from the N-terminus, the 237-residue chain is Uridylate kinase (237 aa).

11 to 14 contacts ATP; the sequence is KLSG. Glycine 53 contacts UMP. The ATP site is built by glycine 54 and arginine 58. Residues aspartate 73 and 134 to 141 each bind UMP; that span reads TGNPFFTT. ATP is bound by residues threonine 161, tyrosine 167, and aspartate 170.

Belongs to the UMP kinase family. As to quaternary structure, homohexamer.

The protein resides in the cytoplasm. The catalysed reaction is UMP + ATP = UDP + ADP. It functions in the pathway pyrimidine metabolism; CTP biosynthesis via de novo pathway; UDP from UMP (UMPK route): step 1/1. Its activity is regulated as follows. Inhibited by UTP. In terms of biological role, catalyzes the reversible phosphorylation of UMP to UDP. In Burkholderia ambifaria (strain ATCC BAA-244 / DSM 16087 / CCUG 44356 / LMG 19182 / AMMD) (Burkholderia cepacia (strain AMMD)), this protein is Uridylate kinase.